We begin with the raw amino-acid sequence, 766 residues long: FYVE, RhoGEF and PH domain-containing protein 4 (766 aa).

The actin filament-binding stretch occupies residues 1 to 150 (MEESNPAPTS…SSVTNSHDEN (150 aa)). Composition is skewed to polar residues over residues 43–65 (STMN…TPQK), 132–145 (RNET…SVTN), and 152–161 (CDSSCRTQGT). The tract at residues 43–167 (STMNLNIPQT…TQGTDLGLPS (125 aa)) is disordered. One can recognise a DH domain in the interval 206 to 393 (KLHKIATELL…STAASHSNSA (188 aa)). The PH 1 domain occupies 422–521 (ELIKEGQILK…WIKALQESID (100 aa)). The segment at 559 to 619 (DNEVTMCMKC…VCKDCYQIMS (61 aa)) adopts an FYVE-type zinc-finger fold. C565, C568, C582, C585, C590, C593, C611, and C614 together coordinate Zn(2+). One can recognise a PH 2 domain in the interval 643 to 740 (NSEVCSFLQY…WLKIILLAVT (98 aa)). S702 and S716 each carry phosphoserine. Residues 745 to 766 (DGPSEHLDTLDNLPGPKEKSEC) are disordered.

Homooligomer. As to expression, detected in brain, lung, liver, skeletal muscle, kidney, testis and cultured hippocampal neurons.

It is found in the cytoplasm. It localises to the cytoskeleton. The protein localises to the cell projection. Its subcellular location is the filopodium. Activates CDC42, a member of the Ras-like family of Rho- and Rac proteins, by exchanging bound GDP for free GTP. Plays a role in regulating the actin cytoskeleton and cell shape. Activates MAPK8. The polypeptide is FYVE, RhoGEF and PH domain-containing protein 4 (Fgd4) (Rattus norvegicus (Rat)).